Reading from the N-terminus, the 349-residue chain is Isopentenyl-diphosphate delta-isomerase (349 aa).

Arginine 9–lysine 10 is a binding site for substrate. FMN contacts are provided by residues alanine 65–threonine 67, serine 95, and asparagine 124. Serine 95–histidine 97 serves as a coordination point for substrate. Residue glutamine 154 coordinates substrate. Glutamate 155 serves as a coordination point for Mg(2+). FMN-binding positions include lysine 186, serine 211, threonine 216, glycine 262–arginine 264, and serine 283–arginine 284.

Belongs to the IPP isomerase type 2 family. As to quaternary structure, homooctamer. Dimer of tetramers. The cofactor is FMN. Requires NADPH as cofactor. Mg(2+) is required as a cofactor.

The protein resides in the cytoplasm. The catalysed reaction is isopentenyl diphosphate = dimethylallyl diphosphate. Its function is as follows. Involved in the biosynthesis of isoprenoids. Catalyzes the 1,3-allylic rearrangement of the homoallylic substrate isopentenyl (IPP) to its allylic isomer, dimethylallyl diphosphate (DMAPP). In Staphylococcus aureus (strain JH1), this protein is Isopentenyl-diphosphate delta-isomerase.